The following is a 141-amino-acid chain: Hemoglobin subunit alpha (141 aa).

The region spanning 1-141 (VLSPADKNNV…VSTVLTSKYR (141 aa)) is the Globin domain. A Phosphoserine modification is found at Ser-3. N6-succinyllysine is present on residues Lys-7 and Lys-11. An N6-acetyllysine; alternate modification is found at Lys-16. Lys-16 carries the N6-succinyllysine; alternate modification. Residue Tyr-24 is modified to Phosphotyrosine. Ser-35 is subject to Phosphoserine. Lys-40 is modified (N6-succinyllysine). A Phosphoserine modification is found at Ser-49. An O2-binding site is contributed by His-58. His-87 serves as a coordination point for heme b. Ser-102 is modified (phosphoserine). At Thr-108 the chain carries Phosphothreonine. Ser-124 and Ser-131 each carry phosphoserine. Residues Thr-134 and Thr-137 each carry the phosphothreonine modification. Residue Ser-138 is modified to Phosphoserine.

The protein belongs to the globin family. In terms of assembly, heterotetramer of two alpha chains and two beta chains. In terms of tissue distribution, red blood cells.

Involved in oxygen transport from the lung to the various peripheral tissues. Its function is as follows. Hemopressin acts as an antagonist peptide of the cannabinoid receptor CNR1. Hemopressin-binding efficiently blocks cannabinoid receptor CNR1 and subsequent signaling. This is Hemoglobin subunit alpha (HBA) from Urocitellus townsendii (Townsend's ground squirrel).